The chain runs to 139 residues: Gastrula zinc finger protein XlCGF67.1 (139 aa).

5 C2H2-type zinc fingers span residues 6–28 (VSCP…KKVH), 33–55 (YSCS…LRTH), 61–83 (YSCS…KRIH), 89–111 (FSCQ…QKIH), and 117–139 (FSCS…SRIH).

This sequence belongs to the krueppel C2H2-type zinc-finger protein family.

Its subcellular location is the nucleus. Its function is as follows. May be involved in transcriptional regulation. This Xenopus laevis (African clawed frog) protein is Gastrula zinc finger protein XlCGF67.1.